We begin with the raw amino-acid sequence, 466 residues long: 3-isopropylmalate dehydratase large subunit (466 aa).

3 residues coordinate [4Fe-4S] cluster: C347, C407, and C410.

This sequence belongs to the aconitase/IPM isomerase family. LeuC type 1 subfamily. As to quaternary structure, heterodimer of LeuC and LeuD. [4Fe-4S] cluster is required as a cofactor.

It catalyses the reaction (2R,3S)-3-isopropylmalate = (2S)-2-isopropylmalate. Its pathway is amino-acid biosynthesis; L-leucine biosynthesis; L-leucine from 3-methyl-2-oxobutanoate: step 2/4. Functionally, catalyzes the isomerization between 2-isopropylmalate and 3-isopropylmalate, via the formation of 2-isopropylmaleate. The sequence is that of 3-isopropylmalate dehydratase large subunit from Pectobacterium atrosepticum (strain SCRI 1043 / ATCC BAA-672) (Erwinia carotovora subsp. atroseptica).